Reading from the N-terminus, the 217-residue chain is Probable nicotinate-nucleotide adenylyltransferase (217 aa).

It belongs to the NadD family.

The catalysed reaction is nicotinate beta-D-ribonucleotide + ATP + H(+) = deamido-NAD(+) + diphosphate. Its pathway is cofactor biosynthesis; NAD(+) biosynthesis; deamido-NAD(+) from nicotinate D-ribonucleotide: step 1/1. In terms of biological role, catalyzes the reversible adenylation of nicotinate mononucleotide (NaMN) to nicotinic acid adenine dinucleotide (NaAD). This is Probable nicotinate-nucleotide adenylyltransferase from Dechloromonas aromatica (strain RCB).